The chain runs to 198 residues: MHYPEPISKLIDSFMKLPGIGPKTAQRLAFHTLDMKEDDVVQFAKALVDVKRELTYCSVCGHITENDPCYICEDKQRDRSVICVVEDDKDVIAMEKMREYKGLYHVLHGSISPMDGIGPEDINIPSLIERLKSDEVSELILAMNPNLEGESTAMYISRLVKPIGIKVTRLAQGLSVGGDLEYADEVTLSKAIAGRTEM.

The C4-type zinc finger occupies 57-72 (CSVCGHITENDPCYIC). The Toprim domain occupies 80–175 (SVICVVEDDK…KVTRLAQGLS (96 aa)).

The protein belongs to the RecR family.

Functionally, may play a role in DNA repair. It seems to be involved in an RecBC-independent recombinational process of DNA repair. It may act with RecF and RecO. The chain is Recombination protein RecR from Staphylococcus aureus (strain JH1).